We begin with the raw amino-acid sequence, 1482 residues long: Glutamate receptor ionotropic, NMDA 2B (1482 aa).

A signal peptide spans Met1–Ala26. The Extracellular portion of the chain corresponds to Arg27–Asp557. Asn74 is a glycosylation site (N-linked (GlcNAc...) asparagine). The cysteines at positions 86 and 321 are disulfide-linked. 2 residues coordinate Zn(2+): His127 and Glu284. 4 N-linked (GlcNAc...) asparagine glycosylation sites follow: Asn341, Asn348, Asn444, and Asn491. Cystine bridges form between Cys429/Cys456 and Cys436/Cys457. L-glutamate contacts are provided by Thr514 and Arg519. Residue Asn542 is glycosylated (N-linked (GlcNAc...) asparagine). The helical transmembrane segment at Val558 to Val576 threads the bilayer. The Cytoplasmic segment spans residues Phe577–Gly603. The segment at residues Lys604–Pro623 is an intramembrane region (discontinuously helical). Residues Lys604 to Pro623 form a pore-forming region. The Cytoplasmic segment spans residues Lys624 to Ile630. A helical transmembrane segment spans residues Met631–Tyr646. Topologically, residues Thr647–Asn817 are extracellular. Residue Asn688 is glycosylated (N-linked (GlcNAc...) asparagine). Residues Ser690–Thr691 and Asp732 each bind L-glutamate. A disulfide bond links Cys746 and Cys801. A helical transmembrane segment spans residues Met818–Ile837. Topologically, residues Cys838–Val1482 are cytoplasmic. Residues Ser882, Ser886, Ser917, and Ser920 each carry the phosphoserine modification. Residues Tyr962 and Tyr1039 each carry the phosphotyrosine modification. A phosphoserine mark is found at Ser1058, Ser1061, and Ser1064. The tract at residues Glu1074–Lys1097 is disordered. A phosphotyrosine mark is found at Tyr1109 and Tyr1133. At Ser1143 the chain carries Phosphoserine. Position 1155 is a phosphotyrosine (Tyr1155). A disordered region spans residues Phe1162–Pro1194. A phosphoserine mark is found at Ser1255 and Ser1259. Positions Pro1266–Ser1277 are enriched in low complexity. Positions Pro1266–Gln1301 are disordered. Residues Thr1278 to Lys1289 are compositionally biased toward polar residues. A compositionally biased stretch (basic residues) spans Ala1290–Gln1301. The segment at Lys1292–Tyr1304 is interaction with DAPK1. Ser1303 is modified (phosphoserine; by DAPK1). Tyr1472 carries the phosphotyrosine modification. The PDZ-binding signature appears at Ser1480–Val1482.

It belongs to the glutamate-gated ion channel (TC 1.A.10.1) family. NR2B/GRIN2B subfamily. As to quaternary structure, heterotetramer. Forms heterotetrameric channels composed of two GluN1/zeta subunits (GRIN1), and two identical GluN2/epsilon subunits (GRIN2A, GRIN2B, GRIN2C or GRIN2D) or GluN3 subunits (GRIN3A or GRIN3B) (in vitro). Can also form heterotetrameric channels that contain at least two GluN1 subunits and at least two different GluN2 subunits (or a combination of one GluN2 and one GluN3 subunits) (in vitro). In vivo, the subunit composition may depend on the expression levels of the different subunits. Found in a complex with GRIN1, GRIN3A and PPP2CB. Interacts with MAGI3. Interacts with HIP1 and NETO1. Interacts with PDZ domains of PATJ, DLG3 and DLG4. Interacts with DAPK1. Found in a complex with GRIN1 and PRR7. Interacts with PRR7. Interacts with CAMK2A. Interacts with ARC; preventing ARC oligomerization. Interacts with TMEM25. Interacts (via the extreme C-terminus) with FRMPD2 (via the second PDZ domain); the interaction is direct and is likely to promote NMDAR-mediated neural signal transmission. GRIN2A binds FRMPD2 with lower affinity than GRIN2B. Interacts with FAM81A; the interaction facilitates condensate formation via liquid-liquid phase separation. In terms of processing, phosphorylated on tyrosine residues. Phosphorylation at Ser-1303 by DAPK1 enhances synaptic NMDA receptor channel activity. In terms of tissue distribution, detected in brain (at protein level). Detected throughout the brain, and in brain stem trigeminal nucleus. Detected in forebrain.

It localises to the cell membrane. The protein localises to the postsynaptic cell membrane. Its subcellular location is the cell projection. The protein resides in the dendrite. It is found in the late endosome. It localises to the lysosome. The protein localises to the cytoplasm. Its subcellular location is the cytoskeleton. The enzyme catalyses Ca(2+)(in) = Ca(2+)(out). It carries out the reaction Na(+)(in) = Na(+)(out). It catalyses the reaction K(+)(in) = K(+)(out). Component of N-methyl-D-aspartate (NMDA) receptors (NMDARs) that function as heterotetrameric, ligand-gated cation channels with high calcium permeability and voltage-dependent block by Mg(2+). Participates in synaptic plasticity for learning and memory formation by contributing to the long-term depression (LTD) of hippocampus membrane currents. Channel activation requires binding of the neurotransmitter L-glutamate to the GluN2 subunit, glycine or D-serine binding to the GluN1 subunit, plus membrane depolarization to eliminate channel inhibition by Mg(2+). NMDARs mediate simultaneously the potasium efflux and the influx of calcium and sodium. Each GluN2 subunit confers differential attributes to channel properties, including activation, deactivation and desensitization kinetics, pH sensitivity, Ca2(+) permeability, and binding to allosteric modulators. In concert with DAPK1 at extrasynaptic sites, acts as a central mediator for stroke damage. Its phosphorylation at Ser-1303 by DAPK1 enhances synaptic NMDA receptor channel activity inducing injurious Ca2+ influx through them, resulting in an irreversible neuronal death. The polypeptide is Glutamate receptor ionotropic, NMDA 2B (Mus musculus (Mouse)).